A 314-amino-acid polypeptide reads, in one-letter code: Atrochrysone carboxyl ACP thioesterase AgnL7 (314 aa).

Zn(2+) is bound by residues His103, His105, Asp107, and His108. Asp107 acts as the Proton donor/acceptor in catalysis.

Belongs to the metallo-beta-lactamase superfamily. Zn(2+) is required as a cofactor.

It catalyses the reaction atrochrysone carboxyl-[ACP] + H2O = atrochrysone carboxylate + holo-[ACP] + H(+). It functions in the pathway secondary metabolite biosynthesis. Atrochrysone carboxyl ACP thioesterase; part of the gene cluster that mediates the biosynthesis of agnestins, dihydroxy-xanthone metabolites. The pathway begins with the assembly and cyclization of atrochrysone thioester by the non-reducing polyketide synthase Agnpks1. The atrochrysone carboxyl ACP thioesterase AgnL7 then breaks the thioester bond and releases the atrochrysone carboxylic acid as the first enzyme-free intermediate. The decarboxylase AgnL1 then catalyzes the concerted decarboxylation-elimination required to convert atochrysone carboxylic acid into emodin anthrone, which is further oxidized to emodin by the anthrone oxygenase AgnL2. Emodin then undergoes reduction catalyzed by the oxidoreductase AgnL4 to yield the dihydroquinone tautomer which is the substrate for reduction by the short chain dehydrogenase AgnL6 reduction to produce hydroxyketone, followed by AgnL8 dehydration and likely spontaneous autoxidation to chrysophanol. Baeyer-Villiger oxidation by the oxidase AgnL3 leads to monodictyphenone via cleavage of the C-10/C-10a bond of chrysophanol. Alternative cleavage at the C-4a/C-10 bond of chrysophanol also leads to the formation some cephalone F. Further conversion to agnestins A and B, requires reduction to dihydro-monodictyphenone, oxidation to agnestin C probably via an epoxide, and rearrangement to either agnestin A or agnestin B directly, although agnestin A or agnestin B can also interconvert. Within the cluster, AgnR1 is the only unassigned oxidoreductase present which could be involved in this conversion. However, AgnR1 seems not to be involved in this step, and thus genes involved in the proposed oxidation/reduction may be located elsewhere on the genome. Further agnestin A derivatives are probably formed by spontaneous decarboxylations, dehydrations and methanolysis reactions. This Paecilomyces divaricatus (Penicillium divaricatum) protein is Atrochrysone carboxyl ACP thioesterase AgnL7.